The sequence spans 116 residues: G antigen 2B/2C (116 aa).

Residues Met1–Cys116 are disordered. Acidic residues-rich tracts occupy residues Phe31–Glu44 and Glu86–Glu95. A compositionally biased stretch (basic and acidic residues) spans Glu102–Cys116.

The protein belongs to the GAGE family. Expressed in a variety of tumor tissues but not in normal tissues, except testis.

Antigen, recognized on melanoma by autologous cytolytic T-lymphocytes. This Homo sapiens (Human) protein is G antigen 2B/2C (GAGE2B).